A 67-amino-acid polypeptide reads, in one-letter code: Medusin-H1 (67 aa).

Residues 1-22 (MDFLKKSLFLVLFLGFFSLSIC) form the signal peptide. A propeptide spanning residues 23-48 (EEEKRETEEKENEQEDDREERREEKR) is cleaved from the precursor. The interval 24–46 (EEKRETEEKENEQEDDREERREE) is disordered. Positions 31–40 (EKENEQEDDR) are enriched in acidic residues. Residue L66 is modified to Leucine amide.

This sequence belongs to the frog skin active peptide (FSAP) family. Medusin subfamily. In terms of tissue distribution, expressed by the skin glands.

Its subcellular location is the secreted. Antimicrobial peptide with activity against Gram-positive bacteria (S.aureus, MIC=32 mg/L) and fungi (C.albicans, MIC=128 mg/L). Shows weak hemolytic activity. The polypeptide is Medusin-H1 (Pithecopus hypochondrialis (Orange-legged leaf frog)).